We begin with the raw amino-acid sequence, 459 residues long: Ribulose bisphosphate carboxylase large chain (459 aa).

K4 bears the N6,N6,N6-trimethyllysine mark. 2 residues coordinate substrate: N113 and T163. Residue K165 is the Proton acceptor of the active site. K167 is a substrate binding site. Mg(2+)-binding residues include K191, D193, and E194. Residue K191 is modified to N6-carboxylysine. H284 acts as the Proton acceptor in catalysis. R285, H317, and S369 together coordinate substrate.

It belongs to the RuBisCO large chain family. Type I subfamily. In terms of assembly, heterohexadecamer of 8 large chains and 8 small chains; disulfide-linked. The disulfide link is formed within the large subunit homodimers. The cofactor is Mg(2+). In terms of processing, the disulfide bond which can form in the large chain dimeric partners within the hexadecamer appears to be associated with oxidative stress and protein turnover.

It is found in the plastid. Its subcellular location is the chloroplast. It carries out the reaction 2 (2R)-3-phosphoglycerate + 2 H(+) = D-ribulose 1,5-bisphosphate + CO2 + H2O. The enzyme catalyses D-ribulose 1,5-bisphosphate + O2 = 2-phosphoglycolate + (2R)-3-phosphoglycerate + 2 H(+). In terms of biological role, ruBisCO catalyzes two reactions: the carboxylation of D-ribulose 1,5-bisphosphate, the primary event in carbon dioxide fixation, as well as the oxidative fragmentation of the pentose substrate in the photorespiration process. Both reactions occur simultaneously and in competition at the same active site. In Cephalotus follicularis (Albany pitcher plant), this protein is Ribulose bisphosphate carboxylase large chain.